Consider the following 124-residue polypeptide: Autophagy-related protein 8 (124 aa).

A lipid anchor (Phosphatidylethanolamine amidated glycine) is attached at glycine 116. The propeptide at 117-124 (GAGPLLEK) is removed in mature form.

It belongs to the ATG8 family. As to quaternary structure, conjugation to phosphatidylethanolamine (PE) leads to homodimerization. Interacts with ATG1, ATG3, ATG4, ATG7 and ATG12. The C-terminal 8 residues of ATG8 are removed by ATG4 to expose Gly-116 at the C-terminus. This Gly-116 forms then a thioester bond with the 'Cys-550' of ATG7 (E1-like activating enzyme) before being transferred to the 'Cys-244' of ATG3 (the specific E2 conjugating enzyme), in order to be finally amidated with phosphatidylethanolamine. This lipid modification anchors ATG8 to membranes and can be reversed by ATG4, releasing soluble ATG8.

The protein localises to the cytoplasmic vesicle. It localises to the cvt vesicle membrane. The protein resides in the autophagosome membrane. Its subcellular location is the vacuole membrane. Ubiquitin-like modifier involved in cytoplasm to vacuole transport (Cvt) vesicles and autophagosome formation. With ATG4, mediates the delivery of the vesicles and autophagosomes to the vacuole via the microtubule cytoskeleton. Required for selective autophagic degradation of the nucleus (nucleophagy) as well as for mitophagy which contributes to regulate mitochondrial quantity and quality by eliminating the mitochondria to a basal level to fulfill cellular energy requirements and preventing excess ROS production. Also participates in membrane fusion events that take place in the early secretory pathway. Also involved in endoplasmic reticulum-specific autophagic process and is essential for the survival of cells subjected to severe ER stress. The ATG8-PE conjugate mediates tethering between adjacent membranes and stimulates membrane hemifusion, leading to expansion of the autophagosomal membrane during autophagy. Moreover not only conjugation, but also subsequent ATG8-PE deconjugation is an important step required to facilitate multiple events during macroautophagy, and especially for efficient autophagosome biogenesis, the assembly of ATG9-containing tubulovesicular clusters into phagophores/autophagosomes, and for the disassembly of PAS-associated ATG components. The protein is Autophagy-related protein 8 of Kluyveromyces marxianus (strain DMKU3-1042 / BCC 29191 / NBRC 104275) (Yeast).